The sequence spans 308 residues: Ribonuclease Z (308 aa).

The Zn(2+) site is built by histidine 60, histidine 62, aspartate 64, histidine 65, histidine 140, aspartate 209, and histidine 269. Aspartate 64 functions as the Proton acceptor in the catalytic mechanism.

Belongs to the RNase Z family. In terms of assembly, homodimer. Zn(2+) is required as a cofactor.

The catalysed reaction is Endonucleolytic cleavage of RNA, removing extra 3' nucleotides from tRNA precursor, generating 3' termini of tRNAs. A 3'-hydroxy group is left at the tRNA terminus and a 5'-phosphoryl group is left at the trailer molecule.. Its function is as follows. Zinc phosphodiesterase, which displays some tRNA 3'-processing endonuclease activity. Probably involved in tRNA maturation, by removing a 3'-trailer from precursor tRNA. The protein is Ribonuclease Z of Methanococcus maripaludis (strain C6 / ATCC BAA-1332).